The primary structure comprises 267 residues: Undecaprenyl-diphosphatase 2 (267 aa).

A run of 8 helical transmembrane segments spans residues 4-24 (IYFIKAFFLGVIEGITEFLPI), 43-63 (EEKVFEVVIQLGGILAVCWLF), 84-104 (FAVIVMISFLPSAIIGALFIH), 109-129 (VLFNTTVVATALIVGGLIILW), 147-167 (IGFKQAIIIGIAQCIAMIPGT), 186-206 (AATEYSFFLAIPTMLGAAIYD), 219-239 (ILAILIGFSAAFISALIVVNA), and 243-263 (FVAKHSLSVFAWYRIALGLII).

It belongs to the UppP family.

Its subcellular location is the cell inner membrane. The catalysed reaction is di-trans,octa-cis-undecaprenyl diphosphate + H2O = di-trans,octa-cis-undecaprenyl phosphate + phosphate + H(+). Functionally, catalyzes the dephosphorylation of undecaprenyl diphosphate (UPP). Confers resistance to bacitracin. The polypeptide is Undecaprenyl-diphosphatase 2 (Shewanella oneidensis (strain ATCC 700550 / JCM 31522 / CIP 106686 / LMG 19005 / NCIMB 14063 / MR-1)).